Here is a 452-residue protein sequence, read N- to C-terminus: Pup--protein ligase (452 aa).

Glu9 contacts Mg(2+). Arg53 contributes to the ATP binding site. Tyr55 is a binding site for Mg(2+). Catalysis depends on Asp57, which acts as the Proton acceptor. Glu63 provides a ligand contact to Mg(2+). The ATP site is built by Thr66 and Trp419.

This sequence belongs to the Pup ligase/Pup deamidase family. Pup-conjugating enzyme subfamily.

The enzyme catalyses ATP + [prokaryotic ubiquitin-like protein]-L-glutamate + [protein]-L-lysine = ADP + phosphate + N(6)-([prokaryotic ubiquitin-like protein]-gamma-L-glutamyl)-[protein]-L-lysine.. It functions in the pathway protein degradation; proteasomal Pup-dependent pathway. Its pathway is protein modification; protein pupylation. Its function is as follows. Catalyzes the covalent attachment of the prokaryotic ubiquitin-like protein modifier Pup to the proteasomal substrate proteins, thereby targeting them for proteasomal degradation. This tagging system is termed pupylation. The ligation reaction involves the side-chain carboxylate of the C-terminal glutamate of Pup and the side-chain amino group of a substrate lysine. This Mycobacterium avium (strain 104) protein is Pup--protein ligase.